A 128-amino-acid polypeptide reads, in one-letter code: Small ribosomal subunit protein uS11 (128 aa).

Belongs to the universal ribosomal protein uS11 family. Part of the 30S ribosomal subunit. Interacts with proteins S7 and S18. Binds to IF-3.

In terms of biological role, located on the platform of the 30S subunit, it bridges several disparate RNA helices of the 16S rRNA. Forms part of the Shine-Dalgarno cleft in the 70S ribosome. This Ligilactobacillus salivarius (strain UCC118) (Lactobacillus salivarius) protein is Small ribosomal subunit protein uS11.